Consider the following 312-residue polypeptide: Calcium-independent mitochondrial carrier protein SCaMC-3L (312 aa).

Solcar repeat units lie at residues 27 to 113 (GTLW…SKNF), 121 to 206 (QLFQ…LQCL), and 217 to 304 (PSGL…MKKT). A run of 6 helical transmembrane segments spans residues 33-50 (LLSGAMAGAVSRTGTAPL), 88-107 (GNGINVLKIAPEYAIKFSVC), 131-144 (SLAVAVSQTLINPM), 182-200 (YLPNMLGIIPYACTDLAVY), 219-243 (GLVSLSSVTLSTTCGQMASYPLTLV), and 279-298 (GMTPTLLKVLPAGGISYLVY).

The protein belongs to the mitochondrial carrier (TC 2.A.29) family. As to expression, mainly expressed in testis and at lesser levels in brain.

The protein localises to the mitochondrion inner membrane. It catalyses the reaction Mg(2+)(out) + phosphate(in) + ATP(out) = Mg(2+)(in) + phosphate(out) + ATP(in). It carries out the reaction ADP(out) + phosphate(in) + H(+)(out) = ADP(in) + phosphate(out) + H(+)(in). Functionally, calcium-independent ATP-Mg/Pi exchanger that catalyzes the electroneutral exchange of Mg-ATP or free ADP against an hydrogenphosphate and participates in the net transport of adenine nucleotides across the mitochondria inner membrane. This Mus musculus (Mouse) protein is Calcium-independent mitochondrial carrier protein SCaMC-3L.